The chain runs to 842 residues: Protein P (842 aa).

The tract at residues 1–177 is terminal protein domain (TP); it reads MPLSYQHFRR…FCGSPYTWEQ (177 aa). Residues 178–345 form a spacer region; sequence DLQHGAFLDG…YCLSHLVNLL (168 aa). The segment at 184-238 is disordered; that stretch reads FLDGPSRVGKEPFRQQSSRIPSRSPVGPSIQSKYQQSRLGLQSQKGPLARGQQGR. Low complexity predominate over residues 197-208; it reads RQQSSRIPSRSP. Over residues 212 to 228 the composition is skewed to polar residues; sequence SIQSKYQQSRLGLQSQK. A polymerase/reverse transcriptase domain (RT) region spans residues 346 to 689; it reads QDWGPCTEHG…YMNLYPVARQ (344 aa). Residues 356–599 form the Reverse transcriptase domain; that stretch reads EHHIRIPRTP…YSLNFMGYVI (244 aa). Residues Asp428, Asp550, and Asp551 each coordinate Mg(2+).

This sequence belongs to the hepadnaviridae P protein family.

The enzyme catalyses DNA(n) + a 2'-deoxyribonucleoside 5'-triphosphate = DNA(n+1) + diphosphate. It carries out the reaction Endonucleolytic cleavage to 5'-phosphomonoester.. Activated by host HSP70 and HSP40 in vitro to be able to bind the epsilon loop of the pgRNA. Because deletion of the RNase H region renders the protein partly chaperone-independent, the chaperones may be needed indirectly to relieve occlusion of the RNA-binding site by this domain. Inhibited by several reverse-transcriptase inhibitors: Lamivudine, Adefovir and Entecavir. Multifunctional enzyme that converts the viral RNA genome into dsDNA in viral cytoplasmic capsids. This enzyme displays a DNA polymerase activity that can copy either DNA or RNA templates, and a ribonuclease H (RNase H) activity that cleaves the RNA strand of RNA-DNA heteroduplexes in a partially processive 3'- to 5'-endonucleasic mode. Neo-synthesized pregenomic RNA (pgRNA) are encapsidated together with the P protein, and reverse-transcribed inside the nucleocapsid. Initiation of reverse-transcription occurs first by binding the epsilon loop on the pgRNA genome, and is initiated by protein priming, thereby the 5'-end of (-)DNA is covalently linked to P protein. Partial (+)DNA is synthesized from the (-)DNA template and generates the relaxed circular DNA (RC-DNA) genome. After budding and infection, the RC-DNA migrates in the nucleus, and is converted into a plasmid-like covalently closed circular DNA (cccDNA). The activity of P protein does not seem to be necessary for cccDNA generation, and is presumably released from (+)DNA by host nuclear DNA repair machinery. This Hepatitis B virus genotype G (isolate IG29227/2000) (HBV-G) protein is Protein P.